We begin with the raw amino-acid sequence, 170 residues long: MQHARVYVCIASPPSRLPSAVPLPPPPAPPPLPSPPRYPFLVGWSWGTGRRPVGFCFIIFFYFLSSPFLNLGLSFPSPTYHESQMINKRVKRKKLQTFGYLSFPITRRIQSRRFPTRENRTKTRSFLFILIVNNNYRQQRNTTKNVNPQGCSCPLDAPVAILMARTAISV.

This is an uncharacterized protein from Homo sapiens (Human).